The sequence spans 130 residues: Small ribosomal subunit protein uS9 (130 aa).

The protein belongs to the universal ribosomal protein uS9 family.

In Pseudomonas fluorescens (strain SBW25), this protein is Small ribosomal subunit protein uS9.